A 647-amino-acid polypeptide reads, in one-letter code: Chaperone protein DnaK (647 aa).

Residue T200 is modified to Phosphothreonine; by autocatalysis. The span at 611–631 shows a compositional bias: low complexity; sequence AGEQGAAGAAGAGAQQQAQPQ. Positions 611 to 647 are disordered; that stretch reads AGEQGAAGAAGAGAQQQAQPQDDNVVDAEFKEVNDKK. Residues 638 to 647 are compositionally biased toward basic and acidic residues; that stretch reads AEFKEVNDKK.

This sequence belongs to the heat shock protein 70 family.

In terms of biological role, acts as a chaperone. This chain is Chaperone protein DnaK, found in Cupriavidus taiwanensis (strain DSM 17343 / BCRC 17206 / CCUG 44338 / CIP 107171 / LMG 19424 / R1) (Ralstonia taiwanensis (strain LMG 19424)).